Consider the following 104-residue polypeptide: Large ribosomal subunit protein bL21 (104 aa).

The protein belongs to the bacterial ribosomal protein bL21 family. In terms of assembly, part of the 50S ribosomal subunit. Contacts protein L20.

Its function is as follows. This protein binds to 23S rRNA in the presence of protein L20. The protein is Large ribosomal subunit protein bL21 of Streptococcus agalactiae serotype Ia (strain ATCC 27591 / A909 / CDC SS700).